Consider the following 168-residue polypeptide: uncharacterized protein (168 aa).

A run of 2 helical transmembrane segments spans residues 4–24 (IIAL…PEEE) and 94–114 (IMVG…GFAW).

To A.aeolicus aq_1446.

The protein localises to the cell membrane. This is an uncharacterized protein from Aquifex aeolicus (strain VF5).